The primary structure comprises 290 residues: 33 kDa chaperonin (290 aa).

Cystine bridges form between Cys-236-Cys-238 and Cys-269-Cys-272.

The protein belongs to the HSP33 family. In terms of processing, under oxidizing conditions two disulfide bonds are formed involving the reactive cysteines. Under reducing conditions zinc is bound to the reactive cysteines and the protein is inactive.

Its subcellular location is the cytoplasm. In terms of biological role, redox regulated molecular chaperone. Protects both thermally unfolding and oxidatively damaged proteins from irreversible aggregation. Plays an important role in the bacterial defense system toward oxidative stress. This chain is 33 kDa chaperonin, found in Acholeplasma laidlawii (strain PG-8A).